We begin with the raw amino-acid sequence, 147 residues long: Small ribosomal subunit protein bS18 (147 aa).

This sequence belongs to the bacterial ribosomal protein bS18 family. As to quaternary structure, part of the 30S ribosomal subunit. Forms a tight heterodimer with protein bS6.

In terms of biological role, binds as a heterodimer with protein bS6 to the central domain of the 16S rRNA, where it helps stabilize the platform of the 30S subunit. This is Small ribosomal subunit protein bS18 from Dehalococcoides mccartyi (strain ATCC BAA-2100 / JCM 16839 / KCTC 5957 / BAV1).